Consider the following 199-residue polypeptide: 5'-deoxynucleotidase YfbR (199 aa).

Residues 18–19 (RW) and His33 contribute to the substrate site. The region spanning 30 to 142 (VSEHSLQVAM…VKQADALCAY (113 aa)) is the HD domain. Residues His33, His68, and Asp69 each contribute to the a divalent metal cation site. Residues Asp69, 77–80 (DLPT), and Asp137 each bind substrate. Asp137 lines the a divalent metal cation pocket.

It belongs to the 5DNU family. In terms of assembly, homodimer. A divalent metal cation serves as cofactor.

The protein localises to the cytoplasm. It catalyses the reaction a 2'-deoxyribonucleoside 5'-phosphate + H2O = a 2'-deoxyribonucleoside + phosphate. Functionally, catalyzes the strictly specific dephosphorylation of 2'-deoxyribonucleoside 5'-monophosphates. In Escherichia coli (strain K12 / MC4100 / BW2952), this protein is 5'-deoxynucleotidase YfbR.